Consider the following 399-residue polypeptide: All trans-polyprenyl-diphosphate synthase PDSS2 (399 aa).

It belongs to the FPP/GGPP synthase family. In terms of assembly, heterotetramer composed of 2 PDSS1/DPS1 and 2 PDSS2/DLP1 subunits.

It localises to the mitochondrion. It catalyses the reaction 7 isopentenyl diphosphate + (2E,6E)-farnesyl diphosphate = all-trans-decaprenyl diphosphate + 7 diphosphate. The enzyme catalyses 6 isopentenyl diphosphate + (2E,6E)-farnesyl diphosphate = all-trans-nonaprenyl diphosphate + 6 diphosphate. Its pathway is cofactor biosynthesis; ubiquinone biosynthesis. Its function is as follows. Heterotetrameric enzyme that catalyzes the condensation of farnesyl diphosphate (FPP), which acts as a primer, and isopentenyl diphosphate (IPP) to produce prenyl diphosphates of varying chain lengths and participates in the determination of the side chain of ubiquinone. Supplies nona and decaprenyl diphosphate, the precursors for the side chain of the isoprenoid quinones ubiquinone-9 (Q9) and ubiquinone-10 (Q10) respectively. The enzyme adds isopentenyl diphosphate molecules sequentially to farnesyl diphosphate with trans stereochemistry. May play a role during cerebellar development. May regulate mitochondrial respiratory chain function. The sequence is that of All trans-polyprenyl-diphosphate synthase PDSS2 from Homo sapiens (Human).